A 338-amino-acid polypeptide reads, in one-letter code: Ketol-acid reductoisomerase (NADP(+)) (338 aa).

The KARI N-terminal Rossmann domain maps to 1 to 181 (MKVFYDKDCD…GGGRAGIIET (181 aa)). NADP(+) is bound by residues 24–27 (YGSQ), R47, and S52. H107 is a catalytic residue. G133 contacts NADP(+). The region spanning 182–327 (DFREETETDL…GKLRAMMPWI (146 aa)) is the KARI C-terminal knotted domain. 4 residues coordinate Mg(2+): D190, E194, E226, and E230. S251 contacts substrate.

The protein belongs to the ketol-acid reductoisomerase family. Mg(2+) serves as cofactor.

It carries out the reaction (2R)-2,3-dihydroxy-3-methylbutanoate + NADP(+) = (2S)-2-acetolactate + NADPH + H(+). The enzyme catalyses (2R,3R)-2,3-dihydroxy-3-methylpentanoate + NADP(+) = (S)-2-ethyl-2-hydroxy-3-oxobutanoate + NADPH + H(+). It functions in the pathway amino-acid biosynthesis; L-isoleucine biosynthesis; L-isoleucine from 2-oxobutanoate: step 2/4. Its pathway is amino-acid biosynthesis; L-valine biosynthesis; L-valine from pyruvate: step 2/4. Functionally, involved in the biosynthesis of branched-chain amino acids (BCAA). Catalyzes an alkyl-migration followed by a ketol-acid reduction of (S)-2-acetolactate (S2AL) to yield (R)-2,3-dihydroxy-isovalerate. In the isomerase reaction, S2AL is rearranged via a Mg-dependent methyl migration to produce 3-hydroxy-3-methyl-2-ketobutyrate (HMKB). In the reductase reaction, this 2-ketoacid undergoes a metal-dependent reduction by NADPH to yield (R)-2,3-dihydroxy-isovalerate. The chain is Ketol-acid reductoisomerase (NADP(+)) from Bordetella petrii (strain ATCC BAA-461 / DSM 12804 / CCUG 43448).